A 304-amino-acid chain; its full sequence is Retrotransposon Gag-like protein 4 (304 aa).

Residues 276–293 (QLCVYCNQAGHFTRDCLA) form a CCHC-type zinc finger.

In terms of tissue distribution, in adults, expressed in brain, eye, kidney, ovary and testis. Weakly expressed in thymus, heart and muscle.

Its function is as follows. Involved in cognitive function in the brain, possibly via the noradrenergic system. The chain is Retrotransposon Gag-like protein 4 from Mus musculus (Mouse).